Reading from the N-terminus, the 41-residue chain is Large ribosomal subunit protein bL36 (41 aa).

This sequence belongs to the bacterial ribosomal protein bL36 family.

This chain is Large ribosomal subunit protein bL36, found in Rickettsia africae (strain ESF-5).